Consider the following 390-residue polypeptide: 1-deoxy-D-xylulose 5-phosphate reductoisomerase (390 aa).

Positions 10, 11, 12, 13, 36, 37, 38, and 121 each coordinate NADPH. Lysine 122 lines the 1-deoxy-D-xylulose 5-phosphate pocket. Residue glutamate 123 participates in NADPH binding. Aspartate 147 contacts Mn(2+). Positions 148, 149, 173, and 196 each coordinate 1-deoxy-D-xylulose 5-phosphate. Residue glutamate 149 participates in Mn(2+) binding. Residue glycine 202 participates in NADPH binding. The 1-deoxy-D-xylulose 5-phosphate site is built by serine 209, asparagine 214, lysine 215, and glutamate 218. Glutamate 218 contributes to the Mn(2+) binding site. The segment at 367-390 (AASEHGRREAEKRVGARAHAPAGR) is disordered. Residues 370 to 380 (EHGRREAEKRV) show a composition bias toward basic and acidic residues.

Belongs to the DXR family. Mg(2+) serves as cofactor. It depends on Mn(2+) as a cofactor.

It carries out the reaction 2-C-methyl-D-erythritol 4-phosphate + NADP(+) = 1-deoxy-D-xylulose 5-phosphate + NADPH + H(+). It participates in isoprenoid biosynthesis; isopentenyl diphosphate biosynthesis via DXP pathway; isopentenyl diphosphate from 1-deoxy-D-xylulose 5-phosphate: step 1/6. Its function is as follows. Catalyzes the NADPH-dependent rearrangement and reduction of 1-deoxy-D-xylulose-5-phosphate (DXP) to 2-C-methyl-D-erythritol 4-phosphate (MEP). This Anaeromyxobacter sp. (strain K) protein is 1-deoxy-D-xylulose 5-phosphate reductoisomerase.